The following is a 694-amino-acid chain: uncharacterized protein (694 aa).

A coiled-coil region spans residues 15-51 (HKEKMELLDQFDNERKEWESQWKIMQKKIEELCREVK). Disordered stretches follow at residues 259-286 (LKRN…EQAY), 461-490 (QNHS…QSND), and 643-680 (NASH…RRTT). 2 stretches are compositionally biased toward polar residues: residues 272–283 (STSRNFPSSDSE) and 476–490 (DTSS…QSND). Positions 663-677 (SRWASRSPSAPPALR) are enriched in low complexity.

This is an uncharacterized protein from Homo sapiens (Human).